The primary structure comprises 350 residues: GTPase Obg (350 aa).

Residues 1–159 form the Obg domain; that stretch reads MKFIDEAKIT…WELALELKVL (159 aa). The interval 17 to 43 is disordered; it reads GDGSASFRREKYIPKGGPDGGDGGRGG. The segment covering 33–43 has biased composition (gly residues); the sequence is GPDGGDGGRGG. An OBG-type G domain is found at 160-334; sequence ADVGLLGMPN…LTYAVMDYLG (175 aa). GTP-binding positions include 166–173, 191–195, 213–216, 284–287, and 315–317; these read GMPNAGKS, FTTLA, DIPG, NKLD, and SAL. Mg(2+) contacts are provided by serine 173 and threonine 193.

Belongs to the TRAFAC class OBG-HflX-like GTPase superfamily. OBG GTPase family. Monomer. Mg(2+) is required as a cofactor.

It localises to the cytoplasm. An essential GTPase which binds GTP, GDP and possibly (p)ppGpp with moderate affinity, with high nucleotide exchange rates and a fairly low GTP hydrolysis rate. Plays a role in control of the cell cycle, stress response, ribosome biogenesis and in those bacteria that undergo differentiation, in morphogenesis control. The sequence is that of GTPase Obg from Thiobacillus denitrificans (strain ATCC 25259 / T1).